A 737-amino-acid polypeptide reads, in one-letter code: Prospero homeobox protein 1 (737 aa).

The tract at residues 1–28 (MPDHDSTALLSRQTKRRRVDIGVKRTVG) is interaction with RORG. Over residues 103-135 (KNGGTEPSFQASGLSSTGSEVHQEDICSNSSRD) the composition is skewed to polar residues. The segment at 103–147 (KNGGTEPSFQASGLSSTGSEVHQEDICSNSSRDSPPECLSPFGRP) is disordered. Phosphoserine is present on residues serine 177, serine 179, serine 199, serine 291, and serine 295. Residues 178-221 (HSPSVALRGNENEREMAPQSVSPRESYRENKRKQKLPQQQQQSF) are disordered. Basic and acidic residues predominate over residues 320–337 (MAENKPKREGSNKERDHG). Disordered regions lie at residues 320 to 344 (MAEN…LQPE) and 444 to 476 (RKNS…AGFT). A Glycyl lysine isopeptide (Lys-Gly) (interchain with G-Cter in SUMO2) cross-link involves residue lysine 324. The span at 464–476 (LHQSPLSATAGFT) shows a compositional bias: polar residues. Residues serine 511 and serine 514 each carry the phosphoserine modification. A disordered region spans residues 525–547 (RTKMSSHHLSHHPCSPAHPPSTA). Serine 557 is modified (phosphoserine). The 59-residue stretch at 577 to 635 (QEGLSPNHLKKAKLMFFYTRYPSSNMLKTYFSDVKFNRCITSQLIKWFSNFREFYYIQM) folds into the Prospero-type homeo domain. The segment at 577–735 (QEGLSPNHLK…KSPNCLQELL (159 aa)) is homeo-Prospero. Positions 636–735 (EKYARQAIND…KSPNCLQELL (100 aa)) constitute a Prospero domain. The segment at 723–729 (EIFKSPN) is essential for nuclear localization, interaction with RORG, repression of RORG transcriptional activator activity.

The protein belongs to the Prospero homeodomain family. In terms of assembly, interacts with RORA and RORG (via AF-2 motif). Expressed in the young neurons of the subventricular region of the CNS, developing eye lens and pancreas. It is also found in the developing liver, heart and skeletal muscle. In the eye, expressed in the lens and retina at postnatal day 10. In the retina, localized to the inner nuclear layer. In the lens, localized to epithelial and fiber cells.

It localises to the nucleus. Functionally, transcription factor involved in developmental processes such as cell fate determination, gene transcriptional regulation and progenitor cell regulation in a number of organs. Plays a critical role in embryonic development and functions as a key regulatory protein in neurogenesis and the development of the heart, eye lens, liver, pancreas and the lymphatic system. Involved in the regulation of the circadian rhythm. Represses: transcription of the retinoid-related orphan receptor RORG, transcriptional activator activity of RORA and RORG and the expression of RORA/G-target genes including core clock components: BMAL1, NPAS2 and CRY1 and metabolic genes: AVPR1A and ELOVL3. The polypeptide is Prospero homeobox protein 1 (Prox1) (Mus musculus (Mouse)).